Reading from the N-terminus, the 270-residue chain is Putative phosphoenolpyruvate synthase regulatory protein (270 aa).

149-156 (GVSRSGKT) contributes to the ADP binding site.

The protein belongs to the pyruvate, phosphate/water dikinase regulatory protein family. PSRP subfamily.

The catalysed reaction is [pyruvate, water dikinase] + ADP = [pyruvate, water dikinase]-phosphate + AMP + H(+). It catalyses the reaction [pyruvate, water dikinase]-phosphate + phosphate + H(+) = [pyruvate, water dikinase] + diphosphate. In terms of biological role, bifunctional serine/threonine kinase and phosphorylase involved in the regulation of the phosphoenolpyruvate synthase (PEPS) by catalyzing its phosphorylation/dephosphorylation. This chain is Putative phosphoenolpyruvate synthase regulatory protein, found in Alteromonas mediterranea (strain DSM 17117 / CIP 110805 / LMG 28347 / Deep ecotype).